The chain runs to 567 residues: MSGVNNTSANELSTTMSNSNSAVGAPSVKTEHGDSKNSLNLDANEPPIDLPQKPLSAYTTVAILCLMIAFGGFIFGWDTGTISGFVNLSDFIRRFGQKNDKGTYYLSKVRMGLIVSIFNIGCAIGGIVLSKVGDIYGRRIGLITVTAIYVVGILIQITSINKWYQYFIGRIISGLGVGGIAVLSPMLISEVAPKHIRGTLVQLYQLMGTMGIFLGYCTNYGTKNYHNATQWRVGLGLCFAWATFMVSGMMFVPESPRYLIEVGKDEEAKRSLSKSNKVSVDDPALLVEYDTIKAGIELEKLAGNASWSELLSTKTKVFQRVLMGVMIQSLQQLTGDNYFFYYGTTIFKSVGLKDSFQTSIIIGVVNFFSSFIAVYTIERFGRRTCLLWGAASMLCCFAVFASVGVTKLWPQGSSHQDITSQGAGNCMIVFTMFFIFSFATTWAGGCYVIVSETFPLRVKSRGMAIATAANWMWGFLISFFTPFITGAINFYYGYVFLGCLVFAYFYVFFFVPETKGLTLEEVNTMWLEGVPAWKSASWVPPERRTADYDADAIDHDNRPIYKRFFSS.

Residues 1-22 (MSGVNNTSANELSTTMSNSNSA) show a composition bias toward polar residues. The tract at residues 1 to 45 (MSGVNNTSANELSTTMSNSNSAVGAPSVKTEHGDSKNSLNLDANE) is disordered. At 1-56 (MSGVNNTSANELSTTMSNSNSAVGAPSVKTEHGDSKNSLNLDANEPPIDLPQKPLS) the chain is on the cytoplasmic side. Residues 57 to 77 (AYTTVAILCLMIAFGGFIFGW) form a helical membrane-spanning segment. Over 78 to 112 (DTGTISGFVNLSDFIRRFGQKNDKGTYYLSKVRMG) the chain is Extracellular. N-linked (GlcNAc...) asparagine glycosylation occurs at asparagine 87. Residues 113-133 (LIVSIFNIGCAIGGIVLSKVG) form a helical membrane-spanning segment. Over 134-139 (DIYGRR) the chain is Cytoplasmic. A helical transmembrane segment spans residues 140 to 160 (IGLITVTAIYVVGILIQITSI). Residues 161 to 170 (NKWYQYFIGR) lie on the Extracellular side of the membrane. The chain crosses the membrane as a helical span at residues 171–191 (IISGLGVGGIAVLSPMLISEV). At 192–197 (APKHIR) the chain is on the cytoplasmic side. The chain crosses the membrane as a helical span at residues 198 to 218 (GTLVQLYQLMGTMGIFLGYCT). Residues 219–232 (NYGTKNYHNATQWR) are Extracellular-facing. The N-linked (GlcNAc...) asparagine glycan is linked to asparagine 227. The chain crosses the membrane as a helical span at residues 233–253 (VGLGLCFAWATFMVSGMMFVP). The Cytoplasmic segment spans residues 254–336 (ESPRYLIEVG…IQSLQQLTGD (83 aa)). A helical transmembrane segment spans residues 337-353 (NYFFYYGTTIFKSVGLK). Over 354–359 (DSFQTS) the chain is Extracellular. A helical transmembrane segment spans residues 360–377 (IIIGVVNFFSSFIAVYTI). At 378–384 (ERFGRRT) the chain is on the cytoplasmic side. The chain crosses the membrane as a helical span at residues 385–405 (CLLWGAASMLCCFAVFASVGV). Residues 406-429 (TKLWPQGSSHQDITSQGAGNCMIV) are Extracellular-facing. A helical transmembrane segment spans residues 430-450 (FTMFFIFSFATTWAGGCYVIV). Residues 451–467 (SETFPLRVKSRGMAIAT) lie on the Cytoplasmic side of the membrane. The helical transmembrane segment at 468-488 (AANWMWGFLISFFTPFITGAI) threads the bilayer. Asparagine 489 is a topological domain (extracellular). A helical transmembrane segment spans residues 490 to 510 (FYYGYVFLGCLVFAYFYVFFF). Residues 511-567 (VPETKGLTLEEVNTMWLEGVPAWKSASWVPPERRTADYDADAIDHDNRPIYKRFFSS) lie on the Cytoplasmic side of the membrane.

Belongs to the major facilitator superfamily. Sugar transporter (TC 2.A.1.1) family.

Its subcellular location is the membrane. In terms of biological role, probable glucose transporter. The sequence is that of Hexose transporter HXT11 (HXT11) from Saccharomyces cerevisiae (strain ATCC 204508 / S288c) (Baker's yeast).